We begin with the raw amino-acid sequence, 312 residues long: DNA-directed RNA polymerase subunit alpha (312 aa).

The alpha N-terminal domain (alpha-NTD) stretch occupies residues 1-226; that stretch reads MIEFKKPNIT…EHFKAFESAD (226 aa). The tract at residues 243-312 is alpha C-terminal domain (alpha-CTD); it reads KEKKLEMTIE…DLGLSLRQED (70 aa).

Belongs to the RNA polymerase alpha chain family. As to quaternary structure, homodimer. The RNAP catalytic core consists of 2 alpha, 1 beta, 1 beta' and 1 omega subunit. When a sigma factor is associated with the core the holoenzyme is formed, which can initiate transcription.

The enzyme catalyses RNA(n) + a ribonucleoside 5'-triphosphate = RNA(n+1) + diphosphate. Functionally, DNA-dependent RNA polymerase catalyzes the transcription of DNA into RNA using the four ribonucleoside triphosphates as substrates. The sequence is that of DNA-directed RNA polymerase subunit alpha from Lactobacillus delbrueckii subsp. bulgaricus (strain ATCC 11842 / DSM 20081 / BCRC 10696 / JCM 1002 / NBRC 13953 / NCIMB 11778 / NCTC 12712 / WDCM 00102 / Lb 14).